Reading from the N-terminus, the 421-residue chain is Serine--tRNA ligase (421 aa).

229–231 (TAE) contributes to the L-serine binding site. 260–262 (RSE) is an ATP binding site. Glutamate 283 serves as a coordination point for L-serine. 347–350 (EISS) contacts ATP. Serine 382 is an L-serine binding site.

The protein belongs to the class-II aminoacyl-tRNA synthetase family. Type-1 seryl-tRNA synthetase subfamily. In terms of assembly, homodimer. The tRNA molecule binds across the dimer.

It localises to the cytoplasm. It carries out the reaction tRNA(Ser) + L-serine + ATP = L-seryl-tRNA(Ser) + AMP + diphosphate + H(+). It catalyses the reaction tRNA(Sec) + L-serine + ATP = L-seryl-tRNA(Sec) + AMP + diphosphate + H(+). The protein operates within aminoacyl-tRNA biosynthesis; selenocysteinyl-tRNA(Sec) biosynthesis; L-seryl-tRNA(Sec) from L-serine and tRNA(Sec): step 1/1. Functionally, catalyzes the attachment of serine to tRNA(Ser). Is also able to aminoacylate tRNA(Sec) with serine, to form the misacylated tRNA L-seryl-tRNA(Sec), which will be further converted into selenocysteinyl-tRNA(Sec). The polypeptide is Serine--tRNA ligase (Symbiobacterium thermophilum (strain DSM 24528 / JCM 14929 / IAM 14863 / T)).